The following is a 491-amino-acid chain: Probable glycine dehydrogenase (decarboxylating) subunit 2 (491 aa).

Position 273 is an N6-(pyridoxal phosphate)lysine (K273).

It belongs to the GcvP family. C-terminal subunit subfamily. As to quaternary structure, the glycine cleavage system is composed of four proteins: P, T, L and H. In this organism, the P 'protein' is a heterodimer of two subunits. Requires pyridoxal 5'-phosphate as cofactor.

The catalysed reaction is N(6)-[(R)-lipoyl]-L-lysyl-[glycine-cleavage complex H protein] + glycine + H(+) = N(6)-[(R)-S(8)-aminomethyldihydrolipoyl]-L-lysyl-[glycine-cleavage complex H protein] + CO2. The glycine cleavage system catalyzes the degradation of glycine. The P protein binds the alpha-amino group of glycine through its pyridoxal phosphate cofactor; CO(2) is released and the remaining methylamine moiety is then transferred to the lipoamide cofactor of the H protein. This Bacillus velezensis (strain DSM 23117 / BGSC 10A6 / LMG 26770 / FZB42) (Bacillus amyloliquefaciens subsp. plantarum) protein is Probable glycine dehydrogenase (decarboxylating) subunit 2.